A 354-amino-acid chain; its full sequence is Guanine nucleotide-binding protein G(q) subunit alpha (354 aa).

Residues Cys-3 and Cys-4 are each lipidated (S-palmitoyl cysteine). The region spanning 32-354 (RELKLLLLGT…QLNLKEYNLV (323 aa)) is the G-alpha domain. Residues 35–48 (KLLLLGTGESGKST) form a G1 motif region. Residues 40–47 (GTGESGKS), 174–180 (LRVRVPT), 199–203 (DVGGQ), 269–272 (NKKD), and Ala-326 each bind GTP. Residues Ser-47 and Thr-180 each contribute to the Mg(2+) site. The interval 172–180 (DILRVRVPT) is G2 motif. The G3 motif stretch occupies residues 195 to 204 (FRMVDVGGQR). The interval 265–272 (ILFLNKKD) is G4 motif. The segment at 324-329 (TCATDT) is G5 motif.

It belongs to the G-alpha family. G(q) subfamily. As to quaternary structure, g proteins are composed of 3 units; alpha, beta and gamma. The alpha chain contains the guanine nucleotide binding site. A high concentration was found in the retinal light-sensitive outer segment.

Its function is as follows. Guanine nucleotide-binding proteins (G proteins) are involved as modulators or transducers in various transmembrane signaling systems. Functionally, the G(q) alpha subunit is involved in the light-dependent activation of phospholipase C. The protein is Guanine nucleotide-binding protein G(q) subunit alpha of Loligo forbesii (Veined squid).